Reading from the N-terminus, the 307-residue chain is Acyl transferase (307 aa).

Active-site charge relay system residues include serine 116, aspartate 213, and histidine 243.

Belongs to the LuxD family.

Its pathway is lipid metabolism; fatty acid reduction for biolumincescence. Its function is as follows. Acyl transferase is part of the fatty acid reductase system required for aldehyde biosynthesis; it produces fatty acids for the luminescent reaction. The polypeptide is Acyl transferase (Aliivibrio fischeri (Vibrio fischeri)).